A 490-amino-acid polypeptide reads, in one-letter code: Glutamate--tRNA ligase (490 aa).

Residues 12 to 22 carry the 'HIGH' region motif; sequence PSPTGTPHVGL. The short motif at 256–260 is the 'KMSKS' region element; it reads KLSKR. Residue Lys-259 participates in ATP binding.

The protein belongs to the class-I aminoacyl-tRNA synthetase family. Glutamate--tRNA ligase type 1 subfamily. In terms of assembly, monomer.

The protein resides in the cytoplasm. It catalyses the reaction tRNA(Glu) + L-glutamate + ATP = L-glutamyl-tRNA(Glu) + AMP + diphosphate. Its function is as follows. Catalyzes the attachment of glutamate to tRNA(Glu) in a two-step reaction: glutamate is first activated by ATP to form Glu-AMP and then transferred to the acceptor end of tRNA(Glu). In Mycobacterium sp. (strain JLS), this protein is Glutamate--tRNA ligase.